A 336-amino-acid polypeptide reads, in one-letter code: Phosphate acyltransferase (336 aa).

This sequence belongs to the PlsX family. In terms of assembly, homodimer. Probably interacts with PlsY.

The protein resides in the cytoplasm. It catalyses the reaction a fatty acyl-[ACP] + phosphate = an acyl phosphate + holo-[ACP]. It participates in lipid metabolism; phospholipid metabolism. Its function is as follows. Catalyzes the reversible formation of acyl-phosphate (acyl-PO(4)) from acyl-[acyl-carrier-protein] (acyl-ACP). This enzyme utilizes acyl-ACP as fatty acyl donor, but not acyl-CoA. The polypeptide is Phosphate acyltransferase (Pseudomonas aeruginosa (strain UCBPP-PA14)).